The primary structure comprises 341 residues: S-adenosylmethionine:tRNA ribosyltransferase-isomerase (341 aa).

The protein belongs to the QueA family. In terms of assembly, monomer.

It is found in the cytoplasm. The catalysed reaction is 7-aminomethyl-7-carbaguanosine(34) in tRNA + S-adenosyl-L-methionine = epoxyqueuosine(34) in tRNA + adenine + L-methionine + 2 H(+). Its pathway is tRNA modification; tRNA-queuosine biosynthesis. Its function is as follows. Transfers and isomerizes the ribose moiety from AdoMet to the 7-aminomethyl group of 7-deazaguanine (preQ1-tRNA) to give epoxyqueuosine (oQ-tRNA). This is S-adenosylmethionine:tRNA ribosyltransferase-isomerase from Clostridium perfringens (strain SM101 / Type A).